The following is a 338-amino-acid chain: HTH-type transcriptional regulator SyrM 1 (338 aa).

Positions Leu35–Thr92 constitute an HTH lysR-type domain. Positions Val52–Arg72 form a DNA-binding region, H-T-H motif.

This sequence belongs to the LysR transcriptional regulatory family.

Its function is as follows. Transcriptional activator that regulates the expression of genes involved in symbiosis. Among other targets it acts on the nolWBTUV operon. This chain is HTH-type transcriptional regulator SyrM 1 (syrM1), found in Sinorhizobium fredii (strain NBRC 101917 / NGR234).